Here is a 100-residue protein sequence, read N- to C-terminus: NADH-quinone oxidoreductase subunit K (100 aa).

The next 3 membrane-spanning stretches (helical) occupy residues 4 to 24 (LQHG…GLII), 28 to 48 (LLFM…AFVV), and 60 to 80 (VMYI…LALL).

Belongs to the complex I subunit 4L family. NDH-1 is composed of 13 different subunits. Subunits NuoA, H, J, K, L, M, N constitute the membrane sector of the complex.

The protein resides in the cell inner membrane. The catalysed reaction is a quinone + NADH + 5 H(+)(in) = a quinol + NAD(+) + 4 H(+)(out). Its function is as follows. NDH-1 shuttles electrons from NADH, via FMN and iron-sulfur (Fe-S) centers, to quinones in the respiratory chain. The immediate electron acceptor for the enzyme in this species is believed to be ubiquinone. Couples the redox reaction to proton translocation (for every two electrons transferred, four hydrogen ions are translocated across the cytoplasmic membrane), and thus conserves the redox energy in a proton gradient. The chain is NADH-quinone oxidoreductase subunit K from Yersinia enterocolitica serotype O:8 / biotype 1B (strain NCTC 13174 / 8081).